Consider the following 178-residue polypeptide: MVTFRFHQYQVVGRGLPSETDEHPKIYRMKLWATNEVRAKSKFWYFLRKLKKVKKSNGQMLAINEIFEKNPTKIKNYGIWLRYQSRTGYHNMYKEYRDTTLNGAVEQMYIEMASRHRVRFPCIQIIKTATIPAKLCKRESSKQFHNSKIKFPLVTRKIRPPSRKLKTHYKASRPNLFM.

Belongs to the eukaryotic ribosomal protein eL20 family.

The chain is Large ribosomal subunit protein eL20 (RPL18A) from Castanea sativa (Sweet chestnut).